A 498-amino-acid chain; its full sequence is MLSNLLILPMLLPFLCALILVFLKNNDRISKYLYLGTMTITTIISLMLLIYVQRHRPITLDFGGWSAPFGIQFLGDSLSLIMVTTASFVITLIMAYGFGRGEHKANRYHLPSFILFLSVGVIGSFLTSDLFNLYVMFEIMLLASFVLITLGQSVEQLRAAIIYVVLNIIGSWLFLLGIGLLYKTVGTLNFSHIAMRLNDMGDNRTVTMISLIFLVAFSAKAALVLFMWLPKAYAVLNTELAALFAALMTKVGAYALIRFFTLLFDQHNDLIHPLLATMAAITMVIGAIGVIAYKDIKKIAAYQVIISIGFIILGLGTNTFAGINGAIFYLVNDIVVKTLLFFIIGSLVYITGYRQYQYLNGLAKKEPLFGVAFIIMIFAIGGVPPFSGFPGKVLIFQGALQNGNYIGLALMIITSLIAMYSLFRIFFYMYFGDKDGEEVNFKKIPLYRKRILSILVVVVIAIGIAAPVVLNVTSDATELNTSDQLYQKLVNPHLKGED.

Transmembrane regions (helical) follow at residues 2 to 22 (LSNLLILPMLLPFLCALILVF), 32 to 52 (YLYLGTMTITTIISLMLLIYV), 78 to 98 (LSLIMVTTASFVITLIMAYGF), 108 to 128 (YHLPSFILFLSVGVIGSFLTS), 130 to 150 (LFNLYVMFEIMLLASFVLITL), 161 to 181 (IIYVVLNIIGSWLFLLGIGLL), 209 to 229 (ISLIFLVAFSAKAALVLFMWL), 240 to 260 (LAALFAALMTKVGAYALIRFF), 271 to 291 (IHPLLATMAAITMVIGAIGVI), 308 to 328 (IGFIILGLGTNTFAGINGAIF), 330 to 350 (LVNDIVVKTLLFFIIGSLVYI), 369 to 389 (FGVAFIIMIFAIGGVPPFSGF), 406 to 426 (IGLALMIITSLIAMYSLFRIF), and 451 to 471 (ILSILVVVVIAIGIAAPVVLN).

Belongs to the CPA3 antiporters (TC 2.A.63) subunit D family. As to quaternary structure, may form a heterooligomeric complex that consists of seven subunits: mnhA2, mnhB2, mnhC2, mnhD2, mnhE2, mnhF2 and mnhG2.

The protein localises to the cell membrane. The polypeptide is Putative antiporter subunit mnhD2 (mnhD2) (Staphylococcus aureus (strain Mu3 / ATCC 700698)).